The following is a 791-amino-acid chain: Outer membrane protein assembly factor BamA (791 aa).

POTRA domains are found at residues 59-130 (NAIA…VTEK), 131-209 (PRID…VEEG), 212-298 (LYIK…VKEG), 301-383 (YKLG…IRKR), and 386-459 (VYIN…VKEQ).

This sequence belongs to the BamA family. In terms of assembly, part of the Bam complex.

The protein resides in the cell outer membrane. In terms of biological role, part of the outer membrane protein assembly complex, which is involved in assembly and insertion of beta-barrel proteins into the outer membrane. In Nitratidesulfovibrio vulgaris (strain ATCC 29579 / DSM 644 / CCUG 34227 / NCIMB 8303 / VKM B-1760 / Hildenborough) (Desulfovibrio vulgaris), this protein is Outer membrane protein assembly factor BamA.